A 476-amino-acid polypeptide reads, in one-letter code: NADH-quinone oxidoreductase subunit N (476 aa).

Transmembrane regions (helical) follow at residues 4 to 24 (LLALSPLILVCATAIVVMLTI), 32 to 52 (LTATLTVVGLNLALAAQVVAW), 67 to 87 (GLAVFGGVLILIATLACATLG), 100 to 117 (EYYLLLLCAAAGGLALVS), 121 to 141 (LAALFFGLELLSMPLYGMLAY), 155 to 175 (YMVLSAAASAFLLFGMALLYS), 198 to 218 (LMAGMGMMLIGLGFKLSIVPF), 230 to 250 (PAPAATFLASASKVAVLLVLL), 263 to 283 (LHSLLAVLAFVTMLVGNLLAL), 291 to 311 (LLGYSSIAHFGYLLVALVVND), 319 to 339 (ALYLVTYVLTTLGAFGVVTLL), 366 to 386 (AVLTVMMLSLAGIPFTAGFIG), 406 to 426 (VVAGSAIGLYYYLRVMVTLFL), and 447 to 467 (VVVLGLAALVVVLGVYPAPMI).

It belongs to the complex I subunit 2 family. As to quaternary structure, NDH-1 is composed of 14 different subunits. Subunits NuoA, H, J, K, L, M, N constitute the membrane sector of the complex.

It localises to the cell inner membrane. The enzyme catalyses a quinone + NADH + 5 H(+)(in) = a quinol + NAD(+) + 4 H(+)(out). NDH-1 shuttles electrons from NADH, via FMN and iron-sulfur (Fe-S) centers, to quinones in the respiratory chain. The immediate electron acceptor for the enzyme in this species is believed to be ubiquinone. Couples the redox reaction to proton translocation (for every two electrons transferred, four hydrogen ions are translocated across the cytoplasmic membrane), and thus conserves the redox energy in a proton gradient. In Chromohalobacter salexigens (strain ATCC BAA-138 / DSM 3043 / CIP 106854 / NCIMB 13768 / 1H11), this protein is NADH-quinone oxidoreductase subunit N.